Here is a 1014-residue protein sequence, read N- to C-terminus: MICAL-like protein 2 (1014 aa).

Positions 1 to 107 (MAAIKALQEW…YVSQYYNYFH (107 aa)) constitute a Calponin-homology (CH) domain. Residues 1–261 (MAAIKALQEW…KLSNLASRQP (261 aa)) are forms an intramolecular interaction with the C-terminal coiled coil domain keeping the protein in a closed conformation. Phosphoserine occurs at positions 110, 144, and 154. A disordered region spans residues 114-181 (GMAGMKRPSS…PSPKAAPGTV (68 aa)). An LIM zinc-binding domain is found at 187–249 (SICGVCGKHV…THHSSEAVSV (63 aa)). Ser-250 carries the phosphoserine modification. A necessary and sufficient for interaction with actinins region spans residues 262–394 (GGGIADTRPI…QGQAASKGVK (133 aa)). The interval 262–810 (GGGIADTRPI…QDDQTRSCKE (549 aa)) is mediates targeting to the cell plasma membrane. Disordered regions lie at residues 311 to 450 (LTPP…SRVP) and 609 to 780 (TLPK…RRKK). Residues 332-355 (STVTTTSANSKATTHVTNSSPVGW) show a composition bias toward polar residues. Positions 356–368 (SSSAQSSTGTSGS) are enriched in low complexity. Polar residues predominate over residues 384-398 (PQGQAASKGVKTQLN). 2 stretches are compositionally biased toward low complexity: residues 399–419 (SSTD…SSRT) and 438–447 (PASSSSSHAS). Composition is skewed to polar residues over residues 624–633 (LSHSTTQAFS) and 646–656 (VGSTSWTSVSL). Composition is skewed to basic and acidic residues over residues 701–711 (EGWRARLKPVD) and 720–737 (LEQK…DTPR). The span at 747–758 (IHITLTPIQQKR) shows a compositional bias: polar residues. At Thr-759 the chain carries Phosphothreonine. Residues Ser-773 and Ser-837 each carry the phosphoserine modification. A forms an intramolecular interaction with the N-terminal Calponin-homology and LIM zinc-binding domains-containing region keeping the protein in a closed conformation region spans residues 811–918 (KTATWGTRES…LMYKSKDQCL (108 aa)). A bMERB domain is found at 838-985 (PVRLHPNYIS…EQEEDQMLES (148 aa)). Positions 845-885 (YISQEELQRQLQDIERQLDALELRGVELEKRLRAAEGDASE) form a coiled coil. Residues 918–1014 (LEERQLDLQG…WSSKSKSGQT (97 aa)) form a mediates interaction with RAB13 and is required for transition from the closed to the open conformation region.

Interacts with RAB13 (GTP-bound form); competes with RAB8A and is involved in tight junctions assembly. Interacts with RAB8A; competes with RAB13 and is involved in E-cadherin endocytic recycling. Interacts with RAB8B. Interacts (preferentially in opened conformation) with ACTN1 and ACTN4; stimulated by RAB13 activation. Interacts (via calponin-homology (CH) domain) with the filamins FLNA, FLNB and FLNC (via actin-binding domain).

It localises to the cell membrane. Its subcellular location is the cell junction. The protein resides in the tight junction. The protein localises to the recycling endosome. It is found in the cell projection. It localises to the neuron projection. Its subcellular location is the cytoplasm. The protein resides in the cytoskeleton. Functionally, effector of small Rab GTPases which is involved in junctional complexes assembly through the regulation of cell adhesion molecules transport to the plasma membrane and actin cytoskeleton reorganization. Regulates the endocytic recycling of occludins, claudins and E-cadherin to the plasma membrane and may thereby regulate the establishment of tight junctions and adherens junctions. In parallel, may regulate actin cytoskeleton reorganization directly through interaction with F-actin or indirectly through actinins and filamins. Most probably involved in the processes of epithelial cell differentiation, cell spreading and neurite outgrowth. Undergoes liquid-liquid phase separation to form tubular recycling endosomes. Plays 2 sequential roles in the biogenesis of tubular recycling endosomes: first organizes phase separation and then the closed form formed by interaction with RAB8A promotes endosomal tubulation. This is MICAL-like protein 2 (Micall2) from Rattus norvegicus (Rat).